Here is a 420-residue protein sequence, read N- to C-terminus: Protein Rv2184c (420 aa).

Belongs to the arsA ATPase family.

The chain is Protein Rv2184c from Mycobacterium tuberculosis (strain ATCC 25618 / H37Rv).